The primary structure comprises 239 residues: Small ribosomal subunit protein uS3c (239 aa).

The KH type-2 domain maps to Ile-43 to Lys-139. The interval Asn-50–Ser-80 is disordered.

This sequence belongs to the universal ribosomal protein uS3 family. Part of the 30S ribosomal subunit.

It is found in the plastid. It localises to the chloroplast. In Agrostis stolonifera (Creeping bentgrass), this protein is Small ribosomal subunit protein uS3c (rps3).